Here is a 208-residue protein sequence, read N- to C-terminus: Transmembrane protein 222 (208 aa).

The tract at residues 1-34 (MAEAEGSSPLLLQPPPPPPRMAEVETPTGAETDM) is disordered. The Extracellular segment spans residues 1–55 (MAEAEGSSPLLLQPPPPPPRMAEVETPTGAETDMKQYHGSGGVVMDVERSRFPYC). A helical membrane pass occupies residues 56-76 (VVWTPIPVLTWFFPIIGHMGI). Over 77 to 164 (CTSAGVIRDF…MRYNNSTNWN (88 aa)) the chain is Cytoplasmic. The chain crosses the membrane as a helical span at residues 165–185 (MVTLCCFCLIYGKYVSVGAFV). Lys186 is a topological domain (extracellular). Residues 187 to 207 (TWLPFVLLLGIILTVSLVFNL) traverse the membrane as a helical segment. Residue Arg208 is a topological domain, cytoplasmic.

The protein localises to the membrane. Its subcellular location is the cell projection. It localises to the dendrite. The polypeptide is Transmembrane protein 222 (Tmem222) (Mus musculus (Mouse)).